Reading from the N-terminus, the 397-residue chain is 16-O-methyltransferase bsc6 (397 aa).

D262 contributes to the S-adenosyl-L-methionine binding site. The active-site Proton acceptor is H302.

This sequence belongs to the class I-like SAM-binding methyltransferase superfamily. Cation-independent O-methyltransferase family. The cofactor is S-adenosyl-L-methionine.

The protein operates within mycotoxin biosynthesis. In terms of biological role, 16-O-methyltransferase; part of the gene cluster that mediates the biosynthesis of the diterpene glucoside brassicicene C. In the first step of the brassicicene C biosynthesis, the bifunctional diterpene synthase bsc8 that possesses both prenyl transferase and terpene cyclase activity, converts isopentenyl diphosphate and dimethylallyl diphosphate into geranylgeranyl diphosphate (GGDP) that is further converted into fusicocca-2,10(14)-diene, the first precursor for brassicicene C. Fusicocca-2,10(14)-diene is then substrate of cytochrome P450 monooxygenase bsc1 for hydroxylation at the C-8 position. Oxidation at C-16 position to aldehyde is then catalyzed by the cytochrome P450 monooyxygenase bsc7, yielding fusicocca-2,10(14)-diene-8-beta,16-diol. Follows the isomerization of the double bond and reduction of aldehyde to alcohol catalyzed by the short-chain dehydrogenase/reductase bsc3 to yield the diol compound fusicocca-1,10(14)-diene-8 beta,16-diol. The next step is the oxidation at the C-3 position of fusicocca-2,10(14)-diene-8-beta,16-diol catalyzed by the alpha-ketoglutarate dependent dioxygenase bsc9, to produce a triol compound. Methylation of the hydroxy group at position 16 is performed by the methyltransferase bsc6. 16-O-methylation is followed by oxidation at the C-13 position to ketone and an alkyl shift of the methyl group leads to brassicicene C. Although the probable acetyltransferase bsc4 is included in the gene cluster, no acetylation reactions are necessary for brassicicene C biosynthesis. However, the fact that brassicicene E, which is a structurally related compound having an acetoxy group at position 12, was previously isolated from another strain of A.brassicicola suggests that the ATCC 96836 strain might also produce a small amount of brassicicene E. The chain is 16-O-methyltransferase bsc6 from Alternaria brassicicola (Dark leaf spot agent).